Reading from the N-terminus, the 120-residue chain is Large ribosomal subunit protein bL17 (120 aa).

It belongs to the bacterial ribosomal protein bL17 family. Part of the 50S ribosomal subunit. Contacts protein L32.

The polypeptide is Large ribosomal subunit protein bL17 (Geobacillus sp. (strain WCH70)).